A 736-amino-acid polypeptide reads, in one-letter code: 1,4-alpha-glucan branching enzyme GlgB (736 aa).

Aspartate 419 (nucleophile) is an active-site residue. The active-site Proton donor is the glutamate 472.

The protein belongs to the glycosyl hydrolase 13 family. GlgB subfamily. Monomer.

The catalysed reaction is Transfers a segment of a (1-&gt;4)-alpha-D-glucan chain to a primary hydroxy group in a similar glucan chain.. Its pathway is glycan biosynthesis; glycogen biosynthesis. Functionally, catalyzes the formation of the alpha-1,6-glucosidic linkages in glycogen by scission of a 1,4-alpha-linked oligosaccharide from growing alpha-1,4-glucan chains and the subsequent attachment of the oligosaccharide to the alpha-1,6 position. In Rhizobium meliloti (strain 1021) (Ensifer meliloti), this protein is 1,4-alpha-glucan branching enzyme GlgB.